We begin with the raw amino-acid sequence, 623 residues long: UvrABC system protein C (623 aa).

The GIY-YIG domain occupies 27–105 (GSPGVYRMLD…IKQLKPRYNV (79 aa)). A UVR domain is found at 215–250 (TKVQANLAEQMQAASEAMEFERAAALRDRIKALTQV).

The protein belongs to the UvrC family. As to quaternary structure, interacts with UvrB in an incision complex.

It localises to the cytoplasm. Its function is as follows. The UvrABC repair system catalyzes the recognition and processing of DNA lesions. UvrC both incises the 5' and 3' sides of the lesion. The N-terminal half is responsible for the 3' incision and the C-terminal half is responsible for the 5' incision. The protein is UvrABC system protein C of Cereibacter sphaeroides (strain ATCC 17023 / DSM 158 / JCM 6121 / CCUG 31486 / LMG 2827 / NBRC 12203 / NCIMB 8253 / ATH 2.4.1.) (Rhodobacter sphaeroides).